A 548-amino-acid chain; its full sequence is Protein swallow (548 aa).

Disordered stretches follow at residues 67-109, 184-206, and 358-428; these read AKTC…GRSS, NCQT…SSSF, and FSSV…ELIS. Positions 79–91 are enriched in acidic residues; the sequence is QEDEDDYDEDVDG. Over residues 189–205 the composition is skewed to low complexity; the sequence is SNSDSNYNSNSNNSSSS. 2 positions are modified to phosphoserine: Ser-362 and Ser-368. Over residues 388-402 the composition is skewed to polar residues; it reads APNNSETSQPSSNDS. The span at 406–420 shows a compositional bias: basic and acidic residues; sequence VEAHEEERPSSRRQW. Phosphoserine occurs at positions 463, 471, 475, 483, 485, and 487.

As to quaternary structure, may be a homo- or heterodimer.

It is found in the nucleus. Has a role in localizing bicoid mRNA at the anterior margin of the oocyte during oogenesis, and a poorly characterized role in nuclear divisions in early embryogenesis. This chain is Protein swallow (swa), found in Drosophila melanogaster (Fruit fly).